A 430-amino-acid chain; its full sequence is Transcription factor PIF4 (430 aa).

5 disordered regions span residues 42-71 (QTHR…DQET), 97-136 (MDPL…VMPP), 160-183 (TVGP…SHDR), 223-266 (DRKR…NLSE), and 405-430 (SSPA…RLDH). Over residues 43–60 (THREQTQTQKQDHHEEAL) the composition is skewed to basic and acidic residues. Residues 61 to 71 (RSSTFLEDQET) show a composition bias toward polar residues. The segment covering 126–136 (CPDPPPQVMPP) has biased composition (pro residues). Positions 160 to 175 (TVGPSHCGSNPSQNDL) are enriched in polar residues. Residues 244–253 (NKSNQRSGSN) are compositionally biased toward low complexity. Residues 257 to 266 (RAAEVHNLSE) show a composition bias toward basic and acidic residues. Residues 257–306 (RAAEVHNLSERRRRDRINERMKALQELIPHCSKTDKASILDEAIDYLKSL) form the bHLH domain. Residues 405-419 (SSPAGQQSQQPSSVP) show a composition bias toward low complexity.

It belongs to the bHLH protein family. Interacts preferentially with the Pfr form of phytochrome B (phyB). Binds DNA as a homodimer, but once bound to DNA, loses its capacity to interact with phyB. Interacts with APRR1/TOC1 and PIF3. Binds to RGL2 and RGA. Forms non-functional heterodimer with HFR1. Interacts with PHYB, CRY1 and CRY2 in the nucleus in response to low blue light (LBL). Interacts with FYPP1 and FYPP3. Associates to PTAC12/HMR/PAP5, which acts as a transcriptional coactivator to trigger the thermoresponsive growth-relevant genes and promote warm-temperature-dependent PIF4 accumulation. Interacts with MED14. Mainly expressed in leaves, stems and seedlings, and, to a lower extent, in fruits, flowers and roots.

The protein resides in the nucleus. Functionally, transcription factor acting negatively in the phytochrome B signaling pathway. May regulate the expression of a subset of genes involved in cell expansion by binding to the G-box motif. Activated by CRY1 and CRY2 in response to low blue light (LBL) by direct binding at chromatin on E-box variant 5'-CA[CT]GTG-3' to stimulate specific gene expression to adapt global physiology (e.g. hypocotyl elongation in low blue light). Element of a PIF4/HMR/MED14-dependent thermoresponsive process; collaboratively with its transcriptional coactivator PTAC12/HMR/PAP5, involved in the regulation of thermoresponsive growth-relevant genes (e.g. mainly involved in biosynthesis and signaling of the phytohormone auxin) leading to daytime warm temperature elicitation of MED14-dependent thermomorphogenesis (e.g. hypocotyl elongation). In Arabidopsis thaliana (Mouse-ear cress), this protein is Transcription factor PIF4.